Consider the following 256-residue polypeptide: MRLFLALLALGFAAVAAVPAYPQRIVGGSTTTIQQYPTIVALLFSRNGNTFFQACGGIILNNRNVLTAAHCPHGDAVNRWRVRSGSTYANSGGAVHNLNRVRIHPNFNRRTLDNDIAIMRTTSNIAFNNAAQPARIAGANYNLGDNQVVWAAGWGAIRSGGPSSEQLRHVQVWTVNQATCRSRYASIGRSVTDNMLCSGWLDVGGRDQCQGDSGGPLYHNGVVVGVCSWGEECALARFPGVNARVSRFANWIRNNS.

Positions 1 to 17 (MRLFLALLALGFAAVAA) are cleaved as a signal peptide. Residues 18–24 (VPAYPQR) constitute a propeptide, activation peptide. Residues 25-256 (IVGGSTTTIQ…RFANWIRNNS (232 aa)) form the Peptidase S1 domain. An intrachain disulfide couples Cys-55 to Cys-71. Active-site charge relay system residues include His-70 and Asp-115. Cystine bridges form between Cys-180-Cys-197 and Cys-209-Cys-233. Ser-213 serves as the catalytic Charge relay system.

It belongs to the peptidase S1 family. Midgut.

It localises to the secreted. The protein resides in the extracellular space. It catalyses the reaction Preferential cleavage: Arg-|-Xaa, Lys-|-Xaa.. This chain is Trypsin, alkaline A, found in Manduca sexta (Tobacco hawkmoth).